The sequence spans 175 residues: Large ribosomal subunit protein uL10 (175 aa).

Belongs to the universal ribosomal protein uL10 family. In terms of assembly, part of the ribosomal stalk of the 50S ribosomal subunit. The N-terminus interacts with L11 and the large rRNA to form the base of the stalk. The C-terminus forms an elongated spine to which L12 dimers bind in a sequential fashion forming a multimeric L10(L12)X complex.

Functionally, forms part of the ribosomal stalk, playing a central role in the interaction of the ribosome with GTP-bound translation factors. This is Large ribosomal subunit protein uL10 from Mycobacterium sp. (strain JLS).